The sequence spans 932 residues: GPI ethanolamine phosphate transferase 1 (932 aa).

The Cytoplasmic segment spans residues methionine 1–leucine 8. Residues valine 9 to phenylalanine 29 traverse the membrane as a helical segment. The Lumenal portion of the chain corresponds to valine 30 to leucine 456. N-linked (GlcNAc...) asparagine glycosylation is found at asparagine 138, asparagine 202, and asparagine 360. Residues valine 457–valine 477 traverse the membrane as a helical segment. The Cytoplasmic portion of the chain corresponds to valine 478 to threonine 486. Residues serine 487–phenylalanine 507 traverse the membrane as a helical segment. At glutamine 508–lysine 509 the chain is on the lumenal side. The helical transmembrane segment at serine 510–glutamine 530 threads the bilayer. The Cytoplasmic portion of the chain corresponds to arginine 531–proline 551. The helical transmembrane segment at alanine 552 to glycine 572 threads the bilayer. At tyrosine 573–glutamate 577 the chain is on the lumenal side. Residues isoleucine 578–alanine 598 form a helical membrane-spanning segment. The Cytoplasmic segment spans residues lysine 599–proline 603. Residues threonine 604–valine 624 form a helical membrane-spanning segment. At lysine 625–glutamate 627 the chain is on the lumenal side. A helical membrane pass occupies residues serine 628–isoleucine 648. Topologically, residues histidine 649–lysine 653 are cytoplasmic. A helical transmembrane segment spans residues leucine 654 to threonine 674. Topologically, residues methionine 675–glutamine 696 are lumenal. The helical transmembrane segment at valine 697–serine 717 threads the bilayer. The Cytoplasmic portion of the chain corresponds to aspartate 718 to phenylalanine 737. A helical transmembrane segment spans residues valine 738 to isoleucine 758. The Lumenal segment spans residues tryptophan 759–methionine 786. The helical transmembrane segment at alanine 787–isoleucine 807 threads the bilayer. Residues serine 808–glycine 828 lie on the Cytoplasmic side of the membrane. Residues alanine 829–leucine 849 traverse the membrane as a helical segment. Topologically, residues asparagine 850–alanine 859 are lumenal. Residues leucine 860–valine 880 form a helical membrane-spanning segment. Over aspartate 881 to glycine 900 the chain is Cytoplasmic. A helical transmembrane segment spans residues leucine 901–isoleucine 921. The Lumenal segment spans residues alanine 922–methionine 932.

This sequence belongs to the PIGG/PIGN/PIGO family. PIGN subfamily.

Its subcellular location is the endoplasmic reticulum membrane. The protein operates within glycolipid biosynthesis; glycosylphosphatidylinositol-anchor biosynthesis. In terms of biological role, ethanolamine phosphate transferase involved in glycosylphosphatidylinositol-anchor biosynthesis. Transfers ethanolamine phosphate to the first alpha-1,4-linked mannose of the glycosylphosphatidylinositol precursor of GPI-anchor. In Yarrowia lipolytica (strain CLIB 122 / E 150) (Yeast), this protein is GPI ethanolamine phosphate transferase 1 (MCD4).